Consider the following 285-residue polypeptide: uncharacterized protein (285 aa).

This is an uncharacterized protein from Mycoplasma pneumoniae (strain ATCC 29342 / M129 / Subtype 1) (Mycoplasmoides pneumoniae).